Reading from the N-terminus, the 169-residue chain is IPEKPFICTECGKCFSEKRTLKHHIRTHTGEKPFICTDCGKCFSFEICLNRHYKTHTRERPFICTECGKSFSDKSRLRVHHRSHTGEKPFTCTDCGKCFSVKSILNHHRQAIHSGEKPFICTECGKGFASKHYLHGHKRTHTGEKPFVCTECGKGFASNYYLHVHKRTH.

6 C2H2-type zinc fingers span residues phenylalanine 6–histidine 28, phenylalanine 34–histidine 56, phenylalanine 62–histidine 84, phenylalanine 90–histidine 113, phenylalanine 119–histidine 141, and phenylalanine 147–histidine 169.

Belongs to the krueppel C2H2-type zinc-finger protein family.

It localises to the nucleus. Its function is as follows. May be involved in transcriptional regulation. The polypeptide is Gastrula zinc finger protein XlCGF62.1 (Xenopus laevis (African clawed frog)).